Reading from the N-terminus, the 467-residue chain is Putative gluconeogenesis factor (467 aa).

Pro residues predominate over residues 1-12; the sequence is MSAPPAPPPDRS. Residues 1–27 form a disordered region; sequence MSAPPAPPPDRSAPPDRTDSAQTEPTR.

This sequence belongs to the gluconeogenesis factor family.

The protein resides in the cytoplasm. Required for morphogenesis under gluconeogenic growth conditions. The polypeptide is Putative gluconeogenesis factor (Deinococcus radiodurans (strain ATCC 13939 / DSM 20539 / JCM 16871 / CCUG 27074 / LMG 4051 / NBRC 15346 / NCIMB 9279 / VKM B-1422 / R1)).